The primary structure comprises 175 residues: Ribosome-binding factor A (175 aa).

A disordered region spans residues 129–175; sequence GAKPAGEADPYRDRGSADEPSDAGGLVIRTSDGLEAENTGDDYQAED. Residues 162–175 are compositionally biased toward acidic residues; it reads LEAENTGDDYQAED.

It belongs to the RbfA family. In terms of assembly, monomer. Binds 30S ribosomal subunits, but not 50S ribosomal subunits or 70S ribosomes.

The protein resides in the cytoplasm. One of several proteins that assist in the late maturation steps of the functional core of the 30S ribosomal subunit. Associates with free 30S ribosomal subunits (but not with 30S subunits that are part of 70S ribosomes or polysomes). Required for efficient processing of 16S rRNA. May interact with the 5'-terminal helix region of 16S rRNA. This chain is Ribosome-binding factor A, found in Mycobacterium marinum (strain ATCC BAA-535 / M).